We begin with the raw amino-acid sequence, 333 residues long: Lipoyl synthase (333 aa).

Residues cysteine 55, cysteine 60, cysteine 66, cysteine 81, cysteine 85, cysteine 88, and serine 292 each coordinate [4Fe-4S] cluster. Positions 67–281 constitute a Radical SAM core domain; it reads WEDREATFLI…SAEAERLGFA (215 aa).

It belongs to the radical SAM superfamily. Lipoyl synthase family. It depends on [4Fe-4S] cluster as a cofactor.

The protein localises to the cytoplasm. The catalysed reaction is [[Fe-S] cluster scaffold protein carrying a second [4Fe-4S](2+) cluster] + N(6)-octanoyl-L-lysyl-[protein] + 2 oxidized [2Fe-2S]-[ferredoxin] + 2 S-adenosyl-L-methionine + 4 H(+) = [[Fe-S] cluster scaffold protein] + N(6)-[(R)-dihydrolipoyl]-L-lysyl-[protein] + 4 Fe(3+) + 2 hydrogen sulfide + 2 5'-deoxyadenosine + 2 L-methionine + 2 reduced [2Fe-2S]-[ferredoxin]. It functions in the pathway protein modification; protein lipoylation via endogenous pathway; protein N(6)-(lipoyl)lysine from octanoyl-[acyl-carrier-protein]: step 2/2. Functionally, catalyzes the radical-mediated insertion of two sulfur atoms into the C-6 and C-8 positions of the octanoyl moiety bound to the lipoyl domains of lipoate-dependent enzymes, thereby converting the octanoylated domains into lipoylated derivatives. The sequence is that of Lipoyl synthase from Kineococcus radiotolerans (strain ATCC BAA-149 / DSM 14245 / SRS30216).